The sequence spans 303 residues: Probable cell division protein WhiA (303 aa).

A DNA-binding region (H-T-H motif) is located at residues 272–303 (SIQQLADSLSTPLTKSGVNHRLRKINKIADEL).

Belongs to the WhiA family.

In terms of biological role, involved in cell division and chromosome segregation. In Streptococcus pneumoniae serotype 2 (strain D39 / NCTC 7466), this protein is Probable cell division protein WhiA.